Here is a 506-residue protein sequence, read N- to C-terminus: Protein P7 (506 aa).

RNA-binding stretches follow at residues 128–249 (ISYL…GKRE) and 325–355 (DGSY…FKIS).

The protein belongs to the phytoreovirus protein P7 family.

It is found in the virion. Its subcellular location is the host cytoplasm. In terms of biological role, probable component of the transcriptional machinery present in the inner capsid. Displays dsRNA binding activity and may play an important role in the sorting of viral RNA and virion assembly. Together with the RNA-directed RNA polymerase P1 and capping enzyme P5, forms an transcriptional complex positioned near the channels situated at each of the five-fold vertices of the core. This is Protein P7 from Alopecurus aequalis (Barnyard grass).